Reading from the N-terminus, the 328-residue chain is tRNA dimethylallyltransferase (328 aa).

Residue 10–17 coordinates ATP; that stretch reads GPTASGKT. 12–17 contacts substrate; the sequence is TASGKT.

Belongs to the IPP transferase family. Monomer. Requires Mg(2+) as cofactor.

It carries out the reaction adenosine(37) in tRNA + dimethylallyl diphosphate = N(6)-dimethylallyladenosine(37) in tRNA + diphosphate. Functionally, catalyzes the transfer of a dimethylallyl group onto the adenine at position 37 in tRNAs that read codons beginning with uridine, leading to the formation of N6-(dimethylallyl)adenosine (i(6)A). The chain is tRNA dimethylallyltransferase from Bifidobacterium longum (strain NCC 2705).